The chain runs to 84 residues: uncharacterized protein (84 aa).

In terms of domain architecture, LITAF spans 1-83 (MDDKFTTLPC…CKQAVFVYKI (83 aa)). Zn(2+)-binding residues include Cys-21 and Cys-24. Residues 39-61 (MSWVVCTAITLACLPCCCIPFLC) are membrane-binding amphipathic helix. Zn(2+) is bound by residues Cys-71 and Cys-74.

It is found in the host membrane. This is an uncharacterized protein from Dryophytes versicolor (chameleon treefrog).